A 445-amino-acid chain; its full sequence is Inward rectifier potassium channel 4 (445 aa).

The Cytoplasmic portion of the chain corresponds to methionine 1 to tryptophan 55. Residues arginine 56–isoleucine 80 form a helical membrane-spanning segment. The Extracellular portion of the chain corresponds to alanine 81–glycine 119. Positions phenylalanine 120–glutamine 131 form an intramembrane region, helical; Pore-forming. An intramembrane region (pore-forming) is located at residues threonine 132–phenylalanine 138. The Selectivity filter signature appears at threonine 133–phenylalanine 138. Residues arginine 139–leucine 147 lie on the Extracellular side of the membrane. The helical transmembrane segment at alanine 148–threonine 169 threads the bilayer. Topologically, residues isoleucine 170–isoleucine 445 are cytoplasmic. Positions serine 443–isoleucine 445 match the PDZ-binding motif.

The protein belongs to the inward rectifier-type potassium channel (TC 1.A.2.1) family. KCNJ4 subfamily. As to quaternary structure, homomultimeric and heteromultimeric association with KCNJ2 and KCNJ12. Interacts with DLG2 and DLG4. Associates, via its PDZ-recognition domain, with a complex containing LIN7A, LIN7B, LIN7C, DLG1, CASK and APBA1. Interacts with TAX1BP3. TAX1BP3 competes with LIN7 family members for KCNJ4 binding. As to expression, highly expressed in the forebrain, moderately in skeletal muscle. Im olfactory bulb, specifically expressed at the postsynaptic membrane of dendritic spines of granule cells.

The protein localises to the cell membrane. It is found in the postsynaptic cell membrane. The protein resides in the cytoplasmic vesicle membrane. The catalysed reaction is K(+)(in) = K(+)(out). In terms of biological role, inward rectifier potassium channels are characterized by a greater tendency to allow potassium to flow into the cell rather than out of it. Their voltage dependence is regulated by the concentration of extracellular potassium; as external potassium is raised, the voltage range of the channel opening shifts to more positive voltages. The inward rectification is mainly due to the blockage of outward current by internal magnesium. Can be blocked by extracellular barium and cesium. This chain is Inward rectifier potassium channel 4 (Kcnj4), found in Mus musculus (Mouse).